We begin with the raw amino-acid sequence, 303 residues long: Glutaminase (303 aa).

Residues S61, N111, E155, N162, Y186, Y238, and V256 each coordinate substrate.

It belongs to the glutaminase family. In terms of assembly, homotetramer.

It carries out the reaction L-glutamine + H2O = L-glutamate + NH4(+). The protein is Glutaminase of Marinomonas sp. (strain MWYL1).